A 446-amino-acid chain; its full sequence is SWI/SNF chromatin-remodeling accessory subunit 1 (446 aa).

The disordered stretch occupies residues 1–53; it reads MQTQARPPVPQGPRFNHPATPQQVRRPINAPLPGQTAQIQGNRGPQPPKKKKR. Positions 220 to 297 constitute an SWIB/MDM2 domain; it reads YQPMKFKLHP…PQRLHQLLQQ (78 aa).

Belongs to the SMARCD family. In terms of assembly, component of the multiprotein chromatin-remodeling complexes SWI/SNF: SWI/SNF-A (BAF), SWI/SNF-B (PBAF) and related complexes. The canonical complex contains a catalytic subunit swsn-4, core subunits swsn-1 and swsn-5, and accessory subunits swsn-3, swsn-6, phf-10, dpff-1, swsn-9 and either ham-3/swsn-2.1 or swsn-2.2. May interact with blmp-1. Broadly expressed in all cell types.

It localises to the nucleus. Involved in transcriptional activation and repression of select genes by chromatin remodeling (alteration of DNA-nucleosome topology). Component of SWI/SNF chromatin remodeling complexes that carry out key enzymatic activities, changing chromatin structure by altering DNA-histone contacts within a nucleosome in an ATP-dependent manner. Required for the blmp-1-mediated transcriptional activation or repression of several hypodermal genes such as bed-3. Involved in regulating differentiation, migration and axon pathfinding of specific serotonergic neurons (HSNs). Probably regulates vulva development through the let-60/Ras pathway. May be involved in regulation of developmental processes in the embryo driven by the Wnt pathway. Involved in gonadogenesis. The polypeptide is SWI/SNF chromatin-remodeling accessory subunit 1 (Caenorhabditis elegans).